A 179-amino-acid polypeptide reads, in one-letter code: Endoribonuclease YbeY (179 aa).

His148, His152, and His158 together coordinate Zn(2+).

Belongs to the endoribonuclease YbeY family. Zn(2+) serves as cofactor.

It localises to the cytoplasm. Functionally, single strand-specific metallo-endoribonuclease involved in late-stage 70S ribosome quality control and in maturation of the 3' terminus of the 16S rRNA. The sequence is that of Endoribonuclease YbeY from Prochlorococcus marinus (strain AS9601).